A 356-amino-acid polypeptide reads, in one-letter code: tRNA-specific 2-thiouridylase MnmA 1 (356 aa).

Residues 8–15 (GMSGGVDS) and Met34 contribute to the ATP site. The active-site Nucleophile is the Cys103. The cysteines at positions 103 and 199 are disulfide-linked. ATP is bound at residue Gly127. Residues 149–151 (KDQ) are interaction with tRNA. The active-site Cysteine persulfide intermediate is Cys199. The interval 305–306 (RY) is interaction with tRNA.

The protein belongs to the MnmA/TRMU family.

Its subcellular location is the cytoplasm. It carries out the reaction S-sulfanyl-L-cysteinyl-[protein] + uridine(34) in tRNA + AH2 + ATP = 2-thiouridine(34) in tRNA + L-cysteinyl-[protein] + A + AMP + diphosphate + H(+). Its function is as follows. Catalyzes the 2-thiolation of uridine at the wobble position (U34) of tRNA, leading to the formation of s(2)U34. This chain is tRNA-specific 2-thiouridylase MnmA 1, found in Clostridium botulinum (strain Langeland / NCTC 10281 / Type F).